The primary structure comprises 167 residues: NADH-quinone oxidoreductase subunit B 2 (167 aa).

The [4Fe-4S] cluster site is built by Cys-38, Cys-39, Cys-103, and Cys-132.

It belongs to the complex I 20 kDa subunit family. As to quaternary structure, NDH-1 is composed of 14 different subunits. Subunits NuoB, C, D, E, F, and G constitute the peripheral sector of the complex. Requires [4Fe-4S] cluster as cofactor.

The protein localises to the cell inner membrane. It carries out the reaction a quinone + NADH + 5 H(+)(in) = a quinol + NAD(+) + 4 H(+)(out). Functionally, NDH-1 shuttles electrons from NADH, via FMN and iron-sulfur (Fe-S) centers, to quinones in the respiratory chain. The immediate electron acceptor for the enzyme in this species is believed to be ubiquinone. Couples the redox reaction to proton translocation (for every two electrons transferred, four hydrogen ions are translocated across the cytoplasmic membrane), and thus conserves the redox energy in a proton gradient. This chain is NADH-quinone oxidoreductase subunit B 2, found in Rhizobium etli (strain CIAT 652).